Here is a 952-residue protein sequence, read N- to C-terminus: Leucine--tRNA ligase (952 aa).

The 'HIGH' region signature appears at 65–76; that stretch reads PYPSGAGLHVGH. Residues 727–731 carry the 'KMSKS' region motif; the sequence is KMGKS. Lysine 730 is an ATP binding site.

The protein belongs to the class-I aminoacyl-tRNA synthetase family.

Its subcellular location is the cytoplasm. It carries out the reaction tRNA(Leu) + L-leucine + ATP = L-leucyl-tRNA(Leu) + AMP + diphosphate. The protein is Leucine--tRNA ligase of Salinispora arenicola (strain CNS-205).